Consider the following 582-residue polypeptide: MNLLGSISTGFPCISLHKKSLRDENPARKRLIDMDPRWNKLRASRSSDYMGCIFEVPLLGFSKVKSSSANGSMQVFCMDYPRPELENTINFLEAAKLSASFRDSIRPKKPLEVVIAGAGLAGLSTAKYLADAGHKPILLEARDVLGGKIAAWKDKDGDFYETGLHIFFGAYPNVQNLFGELGINDRLQWKEHSMIFAMPNKPGEFSRFDFPDVLPAPFNGIWAILRNNEMLTWSEKVKFAIGLLPAMVGGQSYVEAQDSLTVKEWMKRQGVPVRVNDEVFIAMSKALNFINPDELSMQCILIALNRFLQEKHGSKIAFLDGNPPERLCMPIVEHIRSLGGQVELNSRVQKIELNSDRTVKKFVLNNGSVITGDAYVFATPVDILKLLLPEEWKEISCFQRLNKLAGVPVINVHLWFDRKLKNTYDHLLFSRSPLLSVYADMSVTCKEYYDPNRSMLELVFAPADEWISRSDSDIVDATLKELAKLFPNEIAADQSKAKLLKYHVVKTPRSVYKTVPNCEPCRPLQRTPIKGFYLAGDYTKQKYLASMEGAVLSGKLCAQAIVQDYDKLVSTAVGDQSAEMFV.

The N-terminal 93 residues, 1–93 (MNLLGSISTG…ELENTINFLE (93 aa)), are a transit peptide targeting the chloroplast and chromoplast. Residues alanine 121, 140-141 (EA), lysine 148, 165-166 (HI), and tyrosine 171 contribute to the FAD site. Arginine 306 contributes to the substrate binding site. Aspartate 537 contributes to the FAD binding site. A substrate-binding site is contributed by alanine 545. Methionine 547 is a binding site for FAD.

The protein belongs to the carotenoid/retinoid oxidoreductase family. Homotetramer. The cofactor is FAD. As to expression, expressed in flower buds and lips. Lower expression in leaves and roots.

Its subcellular location is the plastid. It is found in the chloroplast. The protein localises to the chromoplast. The protein resides in the membrane. It catalyses the reaction 2 a plastoquinone + 15-cis-phytoene = 9,9',15-tri-cis-zeta-carotene + 2 a plastoquinol. It participates in carotenoid biosynthesis; lycopene biosynthesis. In terms of biological role, converts phytoene into zeta-carotene via the intermediary of phytofluene by the symmetrical introduction of two double bonds at the C-11 and C-11' positions of phytoene with a concomitant isomerization of two neighboring double bonds at the C9 and C9' positions from trans to cis. This is 15-cis-phytoene desaturase, chloroplastic/chromoplastic (PDS) from Oncidium hybrid cultivar (Orchid).